An 838-amino-acid polypeptide reads, in one-letter code: Semaphorin-4G (838 aa).

Positions 1–17 are cleaved as a signal peptide; it reads MWGRLWPLLLSILTATA. Over 18-675 the chain is Extracellular; that stretch reads VPGPSLRRPS…GAQLAPDVRL (658 aa). Residues 35–505 form the Sema domain; sequence RMTIPYEELS…APSGVIQLPL (471 aa). N-linked (GlcNAc...) asparagine glycosylation is found at Asn-55, Asn-111, and Asn-126. Cys-104 and Cys-115 are joined by a disulfide. 3 cysteine pairs are disulfide-bonded: Cys-133-Cys-142, Cys-270-Cys-377, and Cys-294-Cys-337. N-linked (GlcNAc...) asparagine glycosylation is present at Asn-388. The region spanning 507–558 is the PSI domain; the sequence is SCSRYRSCYDCILARDPYCGWDPGTHACAAATTIANRTALIQDIERGNRGCE. 2 disulfides stabilise this stretch: Cys-508/Cys-525 and Cys-517/Cys-534. N-linked (GlcNAc...) asparagine glycans are attached at residues Asn-542 and Asn-598. Positions 567–649 constitute an Ig-like C2-type domain; it reads PPLKTRSVLR…RTLLASYSLT (83 aa). An intrachain disulfide couples Cys-584 to Cys-632. Residues 676–696 traverse the membrane as a helical segment; that stretch reads LYVLAIAALGGLCLILASSLL. The Cytoplasmic portion of the chain corresponds to 697–838; the sequence is YVACLREGRR…LVEQLDESSV (142 aa). The segment at 723–777 is disordered; the sequence is SAVQLQTVSGQCPGEEDEGDDEGAGGLEGSCLQIIPGEGAPAPPPPPPPPPPAEL. Residues 736-745 show a composition bias toward acidic residues; the sequence is GEEDEGDDEG. Residues 763 to 775 show a composition bias toward pro residues; sequence PAPPPPPPPPPPA. Residues Ser-795 and Ser-837 each carry the phosphoserine modification.

This sequence belongs to the semaphorin family. As to quaternary structure, interacts with PLXNB2.

It localises to the cell membrane. Functionally, cell surface receptor for PLXNB2. May play a role in axon guidance. The sequence is that of Semaphorin-4G (SEMA4G) from Homo sapiens (Human).